We begin with the raw amino-acid sequence, 293 residues long: Glutamyl-Q tRNA(Asp) synthetase (293 aa).

L-glutamate is bound by residues 8 to 12 (RFAPT) and Glu-44. The short motif at 11-21 (PTPSGYLHFGS) is the 'HIGH' region element. Residues Cys-100, Cys-102, Tyr-114, and Cys-118 each contribute to the Zn(2+) site. 2 residues coordinate L-glutamate: Tyr-171 and Arg-189. Positions 227 to 231 (KLGKS) match the 'KMSKS' region motif. Lys-230 lines the ATP pocket.

This sequence belongs to the class-I aminoacyl-tRNA synthetase family. GluQ subfamily. Zn(2+) serves as cofactor.

Functionally, catalyzes the tRNA-independent activation of glutamate in presence of ATP and the subsequent transfer of glutamate onto a tRNA(Asp). Glutamate is transferred on the 2-amino-5-(4,5-dihydroxy-2-cyclopenten-1-yl) moiety of the queuosine in the wobble position of the QUC anticodon. This is Glutamyl-Q tRNA(Asp) synthetase from Pseudomonas aeruginosa (strain ATCC 15692 / DSM 22644 / CIP 104116 / JCM 14847 / LMG 12228 / 1C / PRS 101 / PAO1).